A 666-amino-acid chain; its full sequence is tRNA 5-methylaminomethyl-2-thiouridine biosynthesis bifunctional protein MnmC (666 aa).

The tRNA (mnm(5)s(2)U34)-methyltransferase stretch occupies residues 1–245; that stretch reads MKQYAIQPAT…KREMLCGVME (245 aa). The interval 270 to 666 is FAD-dependent cmnm(5)s(2)U34 oxidoreductase; sequence IGGGIASALL…RKLLKGKAVK (397 aa).

The protein in the N-terminal section; belongs to the methyltransferase superfamily. tRNA (mnm(5)s(2)U34)-methyltransferase family. This sequence in the C-terminal section; belongs to the DAO family. FAD serves as cofactor.

Its subcellular location is the cytoplasm. The catalysed reaction is 5-aminomethyl-2-thiouridine(34) in tRNA + S-adenosyl-L-methionine = 5-methylaminomethyl-2-thiouridine(34) in tRNA + S-adenosyl-L-homocysteine + H(+). In terms of biological role, catalyzes the last two steps in the biosynthesis of 5-methylaminomethyl-2-thiouridine (mnm(5)s(2)U) at the wobble position (U34) in tRNA. Catalyzes the FAD-dependent demodification of cmnm(5)s(2)U34 to nm(5)s(2)U34, followed by the transfer of a methyl group from S-adenosyl-L-methionine to nm(5)s(2)U34, to form mnm(5)s(2)U34. This is tRNA 5-methylaminomethyl-2-thiouridine biosynthesis bifunctional protein MnmC from Salmonella paratyphi A (strain ATCC 9150 / SARB42).